The following is a 267-amino-acid chain: Cilia- and flagella-associated protein 300 (267 aa).

It belongs to the CFAP300 family. In terms of assembly, interacts with DNAAF2.

The protein localises to the cytoplasm. It localises to the cytoskeleton. Its subcellular location is the cilium axoneme. Functionally, cilium- and flagellum-specific protein that plays a role in axonemal structure organization and motility. May play a role in outer and inner dynein arm assembly. This chain is Cilia- and flagella-associated protein 300, found in Rattus norvegicus (Rat).